Here is a 417-residue protein sequence, read N- to C-terminus: MLSRSIGKAAGGLVLGLSVAAAAHAAPLFEPVTVLSRAAAGSEPALGKLLATPSTATVQEVRVDAAATAQPQLEFELLGQRVQAVRSKVESLPDGGSIWYGQFRSPSDRLTAATSNGQDDPGNSVILVRSGNTVTGSIRKDGKLYRLRPLGNRHVLVEVDESRMPADHPADYNQLPKIPMGNNDRIGIAQASSGTPATIRVLVVATNAAVAAYGGNMQSLVQLAVAESNQGYVNSNVGITLQLAGYETTSYTESGNFTTDLTRFRNTSDGYMDSIHTSRNNTAADVGVLLINNTSYCGLASGIGSTASTAFAAVYWDCATGYYSFAHEIGHLQSARHDIASDPSTSPYAYGHGYRYEPASGSRWRTIMAYDCSAGCPRLNYWSNPNISYNGVPMGIASSADNQRVLVNTKATIAAFR.

The N-terminal stretch at Met1–Ala25 is a signal peptide. Residue His327 participates in Zn(2+) binding. Residue Glu328 is part of the active site. Zn(2+)-binding residues include His331 and His337.

This sequence belongs to the peptidase M72 family. The cofactor is Zn(2+).

It catalyses the reaction Cleavage of Xaa-|-Asp, Xaa-|-Glu and Xaa-|-cysteic acid bonds.. Metalloprotease, specifically cleaves on the N-terminal side of aspartyl, glutamyl and cysteic acid residues. In Stenotrophomonas maltophilia (strain R551-3), this protein is Peptidyl-Asp metalloendopeptidase.